Here is a 384-residue protein sequence, read N- to C-terminus: Histidinol-phosphate aminotransferase 2 (384 aa).

At lysine 236 the chain carries N6-(pyridoxal phosphate)lysine.

It belongs to the class-II pyridoxal-phosphate-dependent aminotransferase family. Histidinol-phosphate aminotransferase subfamily. As to quaternary structure, homodimer. Pyridoxal 5'-phosphate serves as cofactor.

It carries out the reaction L-histidinol phosphate + 2-oxoglutarate = 3-(imidazol-4-yl)-2-oxopropyl phosphate + L-glutamate. It participates in amino-acid biosynthesis; L-histidine biosynthesis; L-histidine from 5-phospho-alpha-D-ribose 1-diphosphate: step 7/9. The polypeptide is Histidinol-phosphate aminotransferase 2 (hisC2) (Nostoc sp. (strain PCC 7120 / SAG 25.82 / UTEX 2576)).